Consider the following 328-residue polypeptide: 6-phosphogluconolactonase (328 aa).

It belongs to the cycloisomerase 2 family.

It catalyses the reaction 6-phospho-D-glucono-1,5-lactone + H2O = 6-phospho-D-gluconate + H(+). The protein operates within carbohydrate degradation; pentose phosphate pathway; D-ribulose 5-phosphate from D-glucose 6-phosphate (oxidative stage): step 2/3. Functionally, catalyzes the hydrolysis of 6-phosphogluconolactone to 6-phosphogluconate. This Photorhabdus laumondii subsp. laumondii (strain DSM 15139 / CIP 105565 / TT01) (Photorhabdus luminescens subsp. laumondii) protein is 6-phosphogluconolactonase.